The primary structure comprises 720 residues: Protein-glutamine gamma-glutamyltransferase 5 (720 aa).

Ala-2 bears the N-acetylalanine mark. Catalysis depends on residues Cys-278, His-337, and Asp-360. The Ca(2+) site is built by Asn-400, Asp-402, Glu-448, and Glu-453. The disordered stretch occupies residues 470–499 (HGSQRGAELQPSRPTSLSQDSPRSLHTPSL). Over residues 481–496 (SRPTSLSQDSPRSLHT) the composition is skewed to polar residues.

Belongs to the transglutaminase superfamily. Transglutaminase family. The cofactor is Ca(2+). Expressed in foreskin keratinocytes.

The protein resides in the cytoplasm. The enzyme catalyses L-glutaminyl-[protein] + L-lysyl-[protein] = [protein]-L-lysyl-N(6)-5-L-glutamyl-[protein] + NH4(+). Catalyzes the cross-linking of proteins and the conjugation of polyamines to proteins. Contributes to the formation of the cornified cell envelope of keratinocytes. In Homo sapiens (Human), this protein is Protein-glutamine gamma-glutamyltransferase 5 (TGM5).